A 380-amino-acid polypeptide reads, in one-letter code: Glycogenin-2 (380 aa).

UDP contacts are provided by leucine 10, tyrosine 16, and arginine 95. Positions 10, 16, 95, 104, 120, 121, 122, 158, 159, 185, 188, and 189 each coordinate UDP-alpha-D-glucose. Aspartate 120, alanine 121, and aspartate 122 together coordinate UDP. Aspartate 120 is a binding site for Mn(2+). Position 122 (aspartate 122) interacts with Mn(2+). Residues tyrosine 230 and tyrosine 232 are each glycosylated (O-linked (Glc...) tyrosine). UDP-binding residues include histidine 249, glycine 252, and lysine 255. Histidine 249 contacts Mn(2+). Residues glycine 252 and lysine 255 each coordinate UDP-alpha-D-glucose. The disordered stretch occupies residues 331–357 (SVDRNASQKSTAEKHDIEKPTSKPQSA). Residues 341–351 (TAEKHDIEKPT) are compositionally biased toward basic and acidic residues. O-linked (Glc...) tyrosine glycosylation occurs at tyrosine 367.

This sequence belongs to the glycosyltransferase 8 family. Glycogenin subfamily. In terms of assembly, interacts with glycogen synthase GSY2. Requires Mn(2+) as cofactor.

The protein localises to the cytoplasm. Its subcellular location is the vacuole. The enzyme catalyses L-tyrosyl-[glycogenin] + UDP-alpha-D-glucose = alpha-D-glucosyl-L-tyrosyl-[glycogenin] + UDP + H(+). It carries out the reaction [1,4-alpha-D-glucosyl](n)-L-tyrosyl-[glycogenin] + UDP-alpha-D-glucose = [1,4-alpha-D-glucosyl](n+1)-L-tyrosyl-[glycogenin] + UDP + H(+). Functionally, self-glucosylating initiator of glycogen synthesis. It catalyzes the formation of a short alpha (1,4)-glucosyl chain covalently attached via a glucose 1-O-tyrosyl linkage to internal tyrosine residues and these chains act as primers for the elongation reaction catalyzed by glycogen synthase. Capable of transferring glucosyl residues to unbound acceptors such as free oligoglucans or oligoglucan derivatives. In Saccharomyces cerevisiae (strain YJM789) (Baker's yeast), this protein is Glycogenin-2 (GLG2).